The following is a 995-amino-acid chain: Polyprotein nsP1234 (995 aa).

ADP-D-ribose contacts are provided by G30 and F32. Residues C180, C182, C205, and C223 each contribute to the Zn(2+) site. Short sequence motifs (FGDF; binding to host G3BP1) lie at residues 347–350 (FGDL) and 364–367 (FGDF). The RdRp catalytic domain occupies 749-864 (DAVLETDIAS…HGVKSDKLLA (116 aa)).

In terms of assembly, interacts with mRNA-capping enzyme nsP1. Interacts with host DDX1. Interacts with host DDX3. Interacts (via C-terminus) with host G3BP1; this interaction inhibits the formation of host stress granules on viral mRNAs and the nsp3-G3BP1 complexes bind viral RNAs and probably orchestrate the assembly of viral replication complexes. Interacts (via C-terminus) with host G3BP2; this interaction inhibits the formation of host stress granules on viral mRNAs and the nsp3-G3BP2 complexes bind viral RNAs and probably orchestrate the assembly of viral replication complexes. Interacts with mRNA-capping enzyme nsP1. Interacts with protease nsP2. interacts with itself. It depends on Mg(2+) as a cofactor. Mn(2+) is required as a cofactor. Polyprotein P1234: Specific enzymatic cleavages in vivo yield mature proteins. The processing of the polyprotein is temporally regulated. In early stages (1.7 hpi), P1234 is first cleaved in trans through its nsP2 protease activity, releasing P123' and nsP4, which associate to form the early replication complex. At the same time, P1234 is also cut at the nsP1/nsP2 site early in infection but with lower efficiency. After replication of the viral minus-strand RNAs (4 hpi), the polyproteins are cut at the nsP1/nsP2 and nsP2/nsP3 sites very efficiently, preventing accumulation of P123' and P1234 and allowing the formation of the late replication complex. NsP3'/nsP4 site is not cleaved anymore and P34 is produced rather than nsP4. In terms of processing, specific enzymatic cleavages in vivo yield mature proteins. The processing of the polyprotein is temporally regulated. In early stages (1.7 hpi), P123 is cleaved at the nsP1/nsP2 site with low efficiency. After replication of the viral minus-strand RNAs (4 hpi), the polyproteins are cut at the nsP1/nsP2 and nsP2/nsP3 sites very efficiently, preventing accumulation of P123 and allowing the formation of the late replication complex. Post-translationally, specific enzymatic cleavages in vivo yield mature proteins. The processing of the polyprotein is temporally regulated. In early stages (1.7 hpi), P123' is cleaved at the nsP1/nsP2 site with low efficiency. After replication of the viral minus-strand RNAs (4 hpi), the polyproteins are cut at the nsP1/nsP2 and nsP2/nsP3 sites very efficiently, preventing accumulation of P123' and allowing the formation of the late replication complex. Phosphorylated by host on serines and threonines. In terms of processing, ubiquitinated; targets the protein for rapid degradation via the ubiquitin system. Nsp4 is present in extremely low quantities due to low frequency of translation through the amber stop-codon and the degradation by the ubiquitin pathway.

It localises to the host cytoplasmic vesicle membrane. It catalyses the reaction RNA(n) + a ribonucleoside 5'-triphosphate = RNA(n+1) + diphosphate. The enzyme catalyses RNA(n) + ATP = RNA(n)-3'-adenine ribonucleotide + diphosphate. It carries out the reaction 4-O-(ADP-D-ribosyl)-L-aspartyl-[protein] + H2O = L-aspartyl-[protein] + ADP-D-ribose + H(+). The catalysed reaction is 5-O-(ADP-D-ribosyl)-L-glutamyl-[protein] + H2O = L-glutamyl-[protein] + ADP-D-ribose + H(+). It catalyses the reaction ADP-alpha-D-ribose 1''-phosphate + H2O = ADP-D-ribose + phosphate. In terms of biological role, polyprotein P1234: Inactive precursor of the viral replicase, which is activated by cleavages carried out by the viral protease nsP2. Functionally, the early replication complex formed by the polyprotein P123 and nsP4 synthesizes minus-strand RNAs. As soon P123 is cleaved into mature proteins, the plus-strand RNAs synthesis begins. The early replication complex formed by the polyprotein P123' and nsP4 synthesizes minus-strand RNAs. Polyprotein P123' is a short-lived polyprotein that accumulates during early stage of infection. As soon P123' is cleaved into mature proteins, the plus-strand RNAs synthesis begins. Its function is as follows. Seems to be essential for minus-strand RNAs and subgenomic 26S mRNAs synthesis. Displays mono-ADP-ribosylhydrolase activity. ADP-ribosylation is a post-translational modification that controls various processes of the host cell and the virus probably needs to revert it for optimal viral replication. Binds proteins of FXR family and sequesters them into the viral RNA replication complexes thereby inhibiting the formation of host stress granules on viral mRNAs. The nsp3'-FXR complexes bind viral RNAs and probably orchestrate the assembly of viral replication complexes, thanks to the ability of FXR family members to self-assemble and bind DNA. In terms of biological role, seems to be essential for minus-strand RNAs and subgenomic 26S mRNAs synthesis. Displays mono-ADP-ribosylhydrolase activity. ADP-ribosylation is a post-translantional modification that controls various processes of the host cell and the virus probably needs to revert it for optimal viral replication. Binds proteins of G3BP family and sequesters them into the viral RNA replication complexes thereby inhibiting the formation of host stress granules on viral mRNAs. The nsp3-G3BP complexes bind viral RNAs and probably orchestrate the assembly of viral replication complexes, thanks to the ability of G3BP family members to self-assemble and bind DNA. Functionally, RNA dependent RNA polymerase. Replicates genomic and antigenomic RNA by recognizing replications specific signals. The early replication complex formed by the polyprotein P123 and nsP4 synthesizes minus-strand RNAs. The late replication complex composed of fully processed nsP1-nsP4 is responsible for the production of genomic and subgenomic plus-strand RNAs. The core catalytic domain of nsP4 also possesses terminal adenylyltransferase (TATase) activity that is probably involved in maintenance and repair of the poly(A) tail, an element required for replication of the viral genome. In Middelburg virus, this protein is Polyprotein nsP1234.